The following is a 690-amino-acid chain: Elongation factor G (690 aa).

A tr-type G domain is found at 8–283 (EDYRNFGIMA…AVVAYLPSPL (276 aa)). GTP-binding positions include 17–24 (AHIDAGKT), 81–85 (DTPGH), and 135–138 (NKMD).

Belongs to the TRAFAC class translation factor GTPase superfamily. Classic translation factor GTPase family. EF-G/EF-2 subfamily.

The protein resides in the cytoplasm. In terms of biological role, catalyzes the GTP-dependent ribosomal translocation step during translation elongation. During this step, the ribosome changes from the pre-translocational (PRE) to the post-translocational (POST) state as the newly formed A-site-bound peptidyl-tRNA and P-site-bound deacylated tRNA move to the P and E sites, respectively. Catalyzes the coordinated movement of the two tRNA molecules, the mRNA and conformational changes in the ribosome. In Nitrobacter winogradskyi (strain ATCC 25391 / DSM 10237 / CIP 104748 / NCIMB 11846 / Nb-255), this protein is Elongation factor G.